We begin with the raw amino-acid sequence, 328 residues long: uncharacterized protein (328 aa).

The first 32 residues, 1-32, serve as a signal peptide directing secretion; that stretch reads MFNFRLFSRRGKSLGLLAIVLLLFGFYSLKSS.

The protein belongs to the glycosyltransferase 34 family.

The protein localises to the endoplasmic reticulum. This is an uncharacterized protein from Schizosaccharomyces pombe (strain 972 / ATCC 24843) (Fission yeast).